Consider the following 209-residue polypeptide: Small ribosomal subunit protein uS4 (209 aa).

The tract at residues 22-45 is disordered; it reads RGRNPLLRKPNPPGQHGMQRKKKS. Residues 93-154 form the S4 RNA-binding domain; that stretch reads CRLDSIVYRL…KSKRLAIVTE (62 aa).

Belongs to the universal ribosomal protein uS4 family. Part of the 30S ribosomal subunit. Contacts protein S5. The interaction surface between S4 and S5 is involved in control of translational fidelity.

In terms of biological role, one of the primary rRNA binding proteins, it binds directly to 16S rRNA where it nucleates assembly of the body of the 30S subunit. Functionally, with S5 and S12 plays an important role in translational accuracy. The chain is Small ribosomal subunit protein uS4 from Chlamydia trachomatis serovar L2 (strain ATCC VR-902B / DSM 19102 / 434/Bu).